Reading from the N-terminus, the 354-residue chain is Sulfate/thiosulfate import ATP-binding protein CysA (354 aa).

Residues 3-237 (IEVRGLSKRF…PATPFVYGFL (235 aa)) enclose the ABC transporter domain. An ATP-binding site is contributed by 35-42 (GPSGCGKT).

This sequence belongs to the ABC transporter superfamily. Sulfate/tungstate importer (TC 3.A.1.6) family. In terms of assembly, the complex is composed of two ATP-binding proteins (CysA), two transmembrane proteins (CysT and CysW) and a solute-binding protein (CysP).

It localises to the cell inner membrane. It catalyses the reaction sulfate(out) + ATP + H2O = sulfate(in) + ADP + phosphate + H(+). The catalysed reaction is thiosulfate(out) + ATP + H2O = thiosulfate(in) + ADP + phosphate + H(+). Its function is as follows. Part of the ABC transporter complex CysAWTP involved in sulfate/thiosulfate import. Responsible for energy coupling to the transport system. In Bordetella parapertussis (strain 12822 / ATCC BAA-587 / NCTC 13253), this protein is Sulfate/thiosulfate import ATP-binding protein CysA.